Here is a 631-residue protein sequence, read N- to C-terminus: Coiled-coil domain-containing protein 93 (631 aa).

2 disordered regions span residues 1–23 (MGLP…DEEQ) and 214–243 (QSKM…HEED). A sufficient for interaction with CCDC22 region spans residues 1–430 (MGLPRGPEGQ…LKAERAPRGD (430 aa)). Residues 215–225 (SKMEKAEDKKT) show a composition bias toward basic and acidic residues. Ser-298, Ser-301, and Ser-305 each carry phosphoserine. The stretch at 309–631 (LGTSQLHRRK…LLSKVKAKAS (323 aa)) forms a coiled coil. Positions 421-433 (LKAERAPRGDEKT) are enriched in basic and acidic residues. Positions 421–447 (LKAERAPRGDEKTLSSGEPPGTLTSAM) are disordered. The interval 448–631 (THDEDLDRRY…LLSKVKAKAS (184 aa)) is sufficient for interaction with WASHC2C.

It belongs to the CCDC93 family. Component of the commander complex consisting of the CCC subcomplex and the retriever subcomplex. Component of the CCC (COMMD/CCDC22/CCDC93) subcomplex consisting of COMMD1, COMMD2, COMMD3, COMMD4, COMMD5, COMMD6, COMMD7, COMMD8, COMMD9, COMMD10, CCDC22 and CCDC93. Forms a coiled-coil heterodimer with CCDC22; this heterodimer interacts with the guanine nucleotide exchange factor DENND10; the interaction is direct. Interacts with WASHC1. Interacts directly with WASHC2C. Interacts with SNX17 and SNX31.

Its subcellular location is the early endosome. In terms of biological role, component of the commander complex that is essential for endosomal recycling of transmembrane cargos; the commander complex is composed of composed of the CCC subcomplex and the retriever subcomplex. Component of the CCC complex, which is involved in the regulation of endosomal recycling of surface proteins, including integrins, signaling receptor and channels. The CCC complex associates with SNX17, retriever and WASH complexes to prevent lysosomal degradation and promote cell surface recycling of numerous cargos such as integrins ITGA5:ITGB1. Involved in copper-dependent ATP7A trafficking between the trans-Golgi network and vesicles in the cell periphery; the function is proposed to depend on its association within the CCC complex and cooperation with the WASH complex on early endosomes and is dependent on its interaction with WASHC2C. Functionally, (Microbial infection) The CCC complex, in collaboration with the heterotrimeric retriever complex, mediates the exit of human papillomavirus to the cell surface. In Homo sapiens (Human), this protein is Coiled-coil domain-containing protein 93 (CCDC93).